The sequence spans 240 residues: Demethylmenaquinone methyltransferase (240 aa).

S-adenosyl-L-methionine is bound by residues threonine 62, aspartate 80, 102–103 (DA), and serine 119.

This sequence belongs to the class I-like SAM-binding methyltransferase superfamily. MenG/UbiE family.

The catalysed reaction is a 2-demethylmenaquinol + S-adenosyl-L-methionine = a menaquinol + S-adenosyl-L-homocysteine + H(+). The protein operates within quinol/quinone metabolism; menaquinone biosynthesis; menaquinol from 1,4-dihydroxy-2-naphthoate: step 2/2. In terms of biological role, methyltransferase required for the conversion of demethylmenaquinol (DMKH2) to menaquinol (MKH2). The polypeptide is Demethylmenaquinone methyltransferase (Beutenbergia cavernae (strain ATCC BAA-8 / DSM 12333 / CCUG 43141 / JCM 11478 / NBRC 16432 / NCIMB 13614 / HKI 0122)).